Consider the following 625-residue polypeptide: Adenine deaminase 2 (625 aa).

It belongs to the metallo-dependent hydrolases superfamily. Adenine deaminase family. Requires Mn(2+) as cofactor.

It carries out the reaction adenine + H2O + H(+) = hypoxanthine + NH4(+). This chain is Adenine deaminase 2, found in Bradyrhizobium diazoefficiens (strain JCM 10833 / BCRC 13528 / IAM 13628 / NBRC 14792 / USDA 110).